Consider the following 349-residue polypeptide: Ureidoglycolate dehydrogenase (NAD(+)) (349 aa).

The Proton acceptor role is filled by His-116. NAD(+) contacts are provided by residues Ser-140, 174–176, Lys-224, and 306–308; these read DMA and GQD.

This sequence belongs to the LDH2/MDH2 oxidoreductase family. As to quaternary structure, homodimer.

Its subcellular location is the cytoplasm. It carries out the reaction (S)-ureidoglycolate + NAD(+) = N-carbamoyl-2-oxoglycine + NADH + H(+). The protein operates within nitrogen metabolism; (S)-allantoin degradation; oxalurate from (S)-ureidoglycolate: step 1/1. In terms of biological role, allD plays a pivotal role as a metabolic branch-point enzyme in nitrogen utilization via the assimilation of allantoin. It is able to utilize allantoin as a sole source of nitrogen under anaerobic conditions. Catalyzes the oxidation of ureidoglycolate to oxalurate. The polypeptide is Ureidoglycolate dehydrogenase (NAD(+)) (Escherichia coli (strain K12)).